The sequence spans 302 residues: Glutaminase (302 aa).

Residues serine 61, asparagine 111, glutamate 155, asparagine 162, tyrosine 186, tyrosine 238, and valine 256 each coordinate substrate.

This sequence belongs to the glutaminase family. In terms of assembly, homotetramer.

It carries out the reaction L-glutamine + H2O = L-glutamate + NH4(+). This is Glutaminase from Stutzerimonas stutzeri (strain A1501) (Pseudomonas stutzeri).